Consider the following 496-residue polypeptide: Beta-N-acetylhexosaminidase (496 aa).

The Proton donor role is filled by Glu-298.

The protein belongs to the glycosyl hydrolase 20 family.

The enzyme catalyses Hydrolysis of terminal non-reducing N-acetyl-D-hexosamine residues in N-acetyl-beta-D-hexosaminides.. Its pathway is glycan degradation; chitin degradation. Functionally, catalyzes the cleavage of beta-N-acetylglucosaminides and beta-N-acetylgalactosaminides. Also catalyzes the hydrolysis of N-acetylchitooligomers. May be involved in chitin degradation. It is not able to cleave beta-glucosides. This Cellulomonas fimi protein is Beta-N-acetylhexosaminidase (hex20).